Here is a 205-residue protein sequence, read N- to C-terminus: dITP/XTP pyrophosphatase (205 aa).

11-16 (TKNMGK) contacts substrate. Positions 44 and 73 each coordinate Mg(2+). Asp73 serves as the catalytic Proton acceptor. Substrate is bound by residues Ser74, 158-161 (FGYD), Lys181, and 186-187 (HR).

The protein belongs to the HAM1 NTPase family. Homodimer. It depends on Mg(2+) as a cofactor.

The catalysed reaction is XTP + H2O = XMP + diphosphate + H(+). It catalyses the reaction dITP + H2O = dIMP + diphosphate + H(+). It carries out the reaction ITP + H2O = IMP + diphosphate + H(+). In terms of biological role, pyrophosphatase that catalyzes the hydrolysis of nucleoside triphosphates to their monophosphate derivatives, with a high preference for the non-canonical purine nucleotides XTP (xanthosine triphosphate), dITP (deoxyinosine triphosphate) and ITP. Seems to function as a house-cleaning enzyme that removes non-canonical purine nucleotides from the nucleotide pool, thus preventing their incorporation into DNA/RNA and avoiding chromosomal lesions. The polypeptide is dITP/XTP pyrophosphatase (Bacillus cereus (strain ATCC 14579 / DSM 31 / CCUG 7414 / JCM 2152 / NBRC 15305 / NCIMB 9373 / NCTC 2599 / NRRL B-3711)).